The following is a 679-amino-acid chain: MLFCAGNPWLPAFFLQFVIMKKIDLTEKQRDLLVDVLDAEAGFAEEKLLDIASGAVSPLFLSESDLLSFLQAANALYRAGYPLLSDEAYDFTFLTELRRRNPQHPYLLQVEAEPVQQGKTVELPMRMLSTDKAYDLESIRRWGRRIEKAAQEKGIDFTSLVFRGTPKLDGFAAYDDGRRLYTRGDGKKGTDVSRAFARGLQVSRGGSRGLGAGEIVVNKDYFTEHLAQFFDNSRNFQASLIKEKTLALPVVKAIEAGAAIFFPFSMLPDWRGSWLELLQEFEEIVEGLWQKVPYEIDGVVFEIIDEGLREVMGATRHHHRWQIAFKKNTEIAEVTVLRVRPQTSRLGRVNPVAEVEPTRLSGALIQRVTAHHYAMVRDRGIGPGARIRMSRSGEVIPKIEEVVKPVAAAQLDIPAHCPSCGSDLAWDGDYLFCLNNMSCPAQITNSMEHFFKILGNVDGFGPSSVQRLYEGGLVDLPALYAMESADFEQVGFGPKQATNMVEQLNRSREELIEDWRFLAAFGVHRLGMGNCEKLLRYVRLEDVFNLSEEQIVAEIKGFQEKTAHSICAGLAGIKDLFFQLFALGFKLEPTPLLAEGGQGEKSPISGKTIVFTGAMLAASRGDMEKQAKALGATVGKSITGKTDMLVTGQRVGATKMAKAETLGIAILSEEAYRQLVSLD.

Residues aspartate 86 to aspartate 90 and serine 129 to threonine 130 each bind NAD(+). Lysine 167 serves as the catalytic N6-AMP-lysine intermediate. 3 residues coordinate NAD(+): arginine 183, glutamate 214, and lysine 326. Zn(2+) contacts are provided by cysteine 417, cysteine 420, cysteine 433, and cysteine 439. The BRCT domain occupies glycine 599–aspartate 679.

Belongs to the NAD-dependent DNA ligase family. LigA subfamily. Mg(2+) is required as a cofactor. Mn(2+) serves as cofactor.

It catalyses the reaction NAD(+) + (deoxyribonucleotide)n-3'-hydroxyl + 5'-phospho-(deoxyribonucleotide)m = (deoxyribonucleotide)n+m + AMP + beta-nicotinamide D-nucleotide.. DNA ligase that catalyzes the formation of phosphodiester linkages between 5'-phosphoryl and 3'-hydroxyl groups in double-stranded DNA using NAD as a coenzyme and as the energy source for the reaction. It is essential for DNA replication and repair of damaged DNA. The sequence is that of DNA ligase from Desulfotalea psychrophila (strain LSv54 / DSM 12343).